The primary structure comprises 347 residues: 3-isopropylmalate dehydrogenase (347 aa).

Residues R95, R105, R129, and D220 each contribute to the substrate site. Mg(2+) contacts are provided by D220, D244, and D248. 280–292 (GSAPDIAGQGKAD) serves as a coordination point for NAD(+).

It belongs to the isocitrate and isopropylmalate dehydrogenases family. LeuB type 2 subfamily. As to quaternary structure, homodimer. Mg(2+) serves as cofactor. Requires Mn(2+) as cofactor.

It localises to the cytoplasm. It catalyses the reaction (2R,3S)-3-isopropylmalate + NAD(+) = 4-methyl-2-oxopentanoate + CO2 + NADH. Its pathway is amino-acid biosynthesis; L-leucine biosynthesis; L-leucine from 3-methyl-2-oxobutanoate: step 3/4. In terms of biological role, catalyzes the oxidation of 3-carboxy-2-hydroxy-4-methylpentanoate (3-isopropylmalate) to 3-carboxy-4-methyl-2-oxopentanoate. The product decarboxylates to 4-methyl-2 oxopentanoate. The protein is 3-isopropylmalate dehydrogenase of Beutenbergia cavernae (strain ATCC BAA-8 / DSM 12333 / CCUG 43141 / JCM 11478 / NBRC 16432 / NCIMB 13614 / HKI 0122).